An 87-amino-acid polypeptide reads, in one-letter code: Small ribosomal subunit protein bS20 (87 aa).

It belongs to the bacterial ribosomal protein bS20 family.

In terms of biological role, binds directly to 16S ribosomal RNA. In Roseobacter denitrificans (strain ATCC 33942 / OCh 114) (Erythrobacter sp. (strain OCh 114)), this protein is Small ribosomal subunit protein bS20.